A 192-amino-acid chain; its full sequence is Probable thymidylate kinase (192 aa).

7-14 (GIDGAGKS) serves as a coordination point for ATP.

It belongs to the thymidylate kinase family.

It carries out the reaction dTMP + ATP = dTDP + ADP. The protein is Probable thymidylate kinase of Methanobrevibacter smithii (strain ATCC 35061 / DSM 861 / OCM 144 / PS).